Consider the following 164-residue polypeptide: V-type proton ATPase subunit c3 (164 aa).

Residues 1-11 lie on the Lumenal side of the membrane; it reads MSTFSGDETAP. Residues 12–32 traverse the membrane as a helical segment; sequence FFGFLGAAAALVFSCMGAAYG. At 33 to 54 the chain is on the cytoplasmic side; that stretch reads TAKSGVGVASMGVMRPELVMKS. The helical transmembrane segment at 55–75 threads the bilayer; the sequence is IVPVVMAGVLGIYGLIIAVII. The Lumenal portion of the chain corresponds to 76–94; it reads STGINPKAKSYYLFDGYAH. Residues 95 to 116 form a helical membrane-spanning segment; it reads LSSGLACGLAGLSAGMAIGIVG. The Cytoplasmic segment spans residues 117–128; the sequence is DAGVRANAQQPK. The helical transmembrane segment at 129 to 154 threads the bilayer; sequence LFVGMILILIFAEALALYGLIVGIIL. Topologically, residues 155–164 are lumenal; it reads SSRAGQSRAE.

The protein belongs to the V-ATPase proteolipid subunit family. In terms of assembly, V-ATPase is a heteromultimeric enzyme composed of a peripheral catalytic V1 complex (components A to H) attached to an integral membrane V0 proton pore complex (components: a, c, c'', d and e). The proteolipid components c and c'' are present as a hexameric ring that forms the proton-conducting pore. Expressed in leaf, root, flower and silique.

The protein localises to the vacuole membrane. Functionally, proton-conducting pore forming subunit of the membrane integral V0 complex of vacuolar ATPase. V-ATPase is responsible for acidifying a variety of intracellular compartments in eukaryotic cells. The protein is V-type proton ATPase subunit c3 (VHA-c3) of Arabidopsis thaliana (Mouse-ear cress).